The sequence spans 428 residues: Serine--tRNA ligase (428 aa).

Position 236–238 (236–238 (TAE)) interacts with L-serine. 267–269 (RSE) lines the ATP pocket. Position 290 (Glu-290) interacts with L-serine. 354–357 (EISS) is an ATP binding site. Ser-388 contributes to the L-serine binding site.

Belongs to the class-II aminoacyl-tRNA synthetase family. Type-1 seryl-tRNA synthetase subfamily. Homodimer. The tRNA molecule binds across the dimer.

The protein resides in the cytoplasm. It carries out the reaction tRNA(Ser) + L-serine + ATP = L-seryl-tRNA(Ser) + AMP + diphosphate + H(+). It catalyses the reaction tRNA(Sec) + L-serine + ATP = L-seryl-tRNA(Sec) + AMP + diphosphate + H(+). The protein operates within aminoacyl-tRNA biosynthesis; selenocysteinyl-tRNA(Sec) biosynthesis; L-seryl-tRNA(Sec) from L-serine and tRNA(Sec): step 1/1. Functionally, catalyzes the attachment of serine to tRNA(Ser). Is also able to aminoacylate tRNA(Sec) with serine, to form the misacylated tRNA L-seryl-tRNA(Sec), which will be further converted into selenocysteinyl-tRNA(Sec). This chain is Serine--tRNA ligase, found in Psychrobacter sp. (strain PRwf-1).